The sequence spans 441 residues: Maltose-6'-phosphate glucosidase MalH (441 aa).

4 to 70 (FSVVIAGGGS…PEIEFLATTN (67 aa)) serves as a coordination point for NAD(+). Substrate-binding residues include R93 and N147. Mn(2+) is bound at residue C169. Residue D170 is the Proton donor of the active site. Mn(2+) is bound at residue H200. The active-site Proton acceptor is the Y264. R284 contacts substrate.

In terms of assembly, homotetramer. It depends on NAD(+) as a cofactor. Mn(2+) serves as cofactor.

The enzyme catalyses alpha-maltose 6'-phosphate + H2O = D-glucose 6-phosphate + D-glucose. Catalyzes the hydrolysis of O-alpha-linked disaccharide 6-phosphates, including maltose-6'P and all five phosphorylated isomers of sucrose, but not sucrose-6P. Does not hydrolyze beta-linked disaccharide 6-phosphates such as cellobiose-6'P and gentiobiose-6'P. Is involved in the dissimilation of maltose and related O-alpha-linked glucosides produced via the phosphoenolpyruvate-dependent sugar phosphotransferase system (PEP-PTS). This is Maltose-6'-phosphate glucosidase MalH (malH) from Clostridium acetobutylicum (strain ATCC 824 / DSM 792 / JCM 1419 / IAM 19013 / LMG 5710 / NBRC 13948 / NRRL B-527 / VKM B-1787 / 2291 / W).